Reading from the N-terminus, the 196-residue chain is Peptidyl-tRNA hydrolase (196 aa).

Position 19 (Tyr-19) interacts with tRNA. The active-site Proton acceptor is His-24. TRNA contacts are provided by Tyr-68, Asn-70, and Asn-116.

Belongs to the PTH family. In terms of assembly, monomer.

It localises to the cytoplasm. It catalyses the reaction an N-acyl-L-alpha-aminoacyl-tRNA + H2O = an N-acyl-L-amino acid + a tRNA + H(+). Functionally, hydrolyzes ribosome-free peptidyl-tRNAs (with 1 or more amino acids incorporated), which drop off the ribosome during protein synthesis, or as a result of ribosome stalling. Catalyzes the release of premature peptidyl moieties from peptidyl-tRNA molecules trapped in stalled 50S ribosomal subunits, and thus maintains levels of free tRNAs and 50S ribosomes. The sequence is that of Peptidyl-tRNA hydrolase from Aromatoleum aromaticum (strain DSM 19018 / LMG 30748 / EbN1) (Azoarcus sp. (strain EbN1)).